The following is a 433-amino-acid chain: Ribonuclease T2-like (433 aa).

Intrachain disulfides connect cysteine 28/cysteine 47, cysteine 36/cysteine 95, cysteine 46/cysteine 171, and cysteine 103/cysteine 163. 2 N-linked (GlcNAc...) asparagine glycosylation sites follow: asparagine 38 and asparagine 71. Active-site residues include histidine 88, glutamate 156, and histidine 160. Asparagine 221 and asparagine 263 each carry an N-linked (GlcNAc...) asparagine glycan. Cysteines 247 and 283 form a disulfide.

This sequence belongs to the RNase T2 family.

The protein localises to the vacuole lumen. The protein resides in the cytoplasm. The catalysed reaction is a ribonucleotidyl-ribonucleotide-RNA + H2O = a 3'-end 3'-phospho-ribonucleotide-RNA + a 5'-end dephospho-ribonucleoside-RNA + H(+). Its function is as follows. Rnase which modulates cell survival under stress conditions. Released from the vacuole to the cytoplasm during stress to promote tRNA and rRNA cleavage and to activate separately a downstream pathway that promotes cell death. Involved in cell size, vacuolar morphology and growth at high temperatures and high salt concentration. The sequence is that of Ribonuclease T2-like (RNY1) from Candida glabrata (strain ATCC 2001 / BCRC 20586 / JCM 3761 / NBRC 0622 / NRRL Y-65 / CBS 138) (Yeast).